The following is a 152-amino-acid chain: UPF0719 transmembrane protein MT2674.1 (152 aa).

The next 4 membrane-spanning stretches (helical) occupy residues 21 to 41 (VATV…FLMV), 62 to 82 (VVLA…AIYA), 92 to 112 (IGVA…LVIL), and 131 to 151 (PAVF…AAAL).

This sequence belongs to the UPF0719 family.

It localises to the cell membrane. The chain is UPF0719 transmembrane protein MT2674.1 from Mycobacterium tuberculosis (strain CDC 1551 / Oshkosh).